We begin with the raw amino-acid sequence, 137 residues long: ATP synthase epsilon chain (137 aa).

The protein belongs to the ATPase epsilon chain family. As to quaternary structure, F-type ATPases have 2 components, CF(1) - the catalytic core - and CF(0) - the membrane proton channel. CF(1) has five subunits: alpha(3), beta(3), gamma(1), delta(1), epsilon(1). CF(0) has three main subunits: a, b and c.

It is found in the cell membrane. In terms of biological role, produces ATP from ADP in the presence of a proton gradient across the membrane. The polypeptide is ATP synthase epsilon chain (Caldicellulosiruptor bescii (strain ATCC BAA-1888 / DSM 6725 / KCTC 15123 / Z-1320) (Anaerocellum thermophilum)).